Reading from the N-terminus, the 638-residue chain is Epithelial sodium channel subunit delta (638 aa).

Over residues 1 to 13 the composition is skewed to basic and acidic residues; it reads MAEHRSMDGRMEA. A disordered region spans residues 1-47; the sequence is MAEHRSMDGRMEAATRGGSHLQAAAQTPPRPGPPSAPPPPPKEGHQE. Residues 1-86 lie on the Cytoplasmic side of the membrane; the sequence is MAEHRSMDGR…CSRGNRLKTT (86 aa). Pro residues predominate over residues 28–41; that stretch reads PPRPGPPSAPPPPP. The helical transmembrane segment at 87-107 threads the bilayer; the sequence is SWGLLSLGALVALCWQLGLLF. Over 108-530 the chain is Extracellular; sequence ERHWHRPVLM…VPQLLSAMGS (423 aa). N-linked (GlcNAc...) asparagine glycosylation is found at asparagine 166 and asparagine 384. The helical transmembrane segment at 531 to 551 threads the bilayer; it reads LCSLWFGASVLSLLELLELLL. Residues 552–638 lie on the Cytoplasmic side of the membrane; the sequence is DASALTLVLG…GPQPLETLDT (87 aa). Positions 574–613 are disordered; sequence RASPASGASSIKPEASQMPTPAGGTSDDPEPSGPHLPRVM.

Belongs to the amiloride-sensitive sodium channel (TC 1.A.6) family. SCNN1D subfamily. In terms of assembly, can form an alternative heterotrimeric epithelial sodium channel (ENaC), composed of a delta (SCNN1D), beta (SCNN1B), and gamma (SCNN1G) subunit, where the delta (SCNN1D) subunit replaces the alpha (SCNN1A) subunit.

Its subcellular location is the apical cell membrane. The enzyme catalyses Na(+)(in) = Na(+)(out). With respect to regulation, originally identified and characterized by its inhibition by the diuretic drug amiloride. Potential alternative pore-forming subunit of the epithelial sodium channel (ENaC), capable of replacing the alpha/SCNN1A subunit, creating a more active channel with distinct properties. ENaC functions in epithelial tissues, where it facilitates the electrodiffusion of sodium ions from the extracellular fluid through the apical membrane of cells, with water following osmotically, regulating sodium balance and fluid homeostasis. This subunit could also function independently as a sodium channel or assemble into other tissue-specific heterotrimeric sodium channels. The protein is Epithelial sodium channel subunit delta of Pan troglodytes (Chimpanzee).